The chain runs to 95 residues: MAKKSLIQKNKLIFKNSKKNFKIIIIKNKLKKKFTFNLLLKIQSIKKKKLKTKFINRCYISGRTRSFYNRFSLNRNLIRKIGNFGYITGIEKSSW.

Belongs to the universal ribosomal protein uS14 family. In terms of assembly, part of the 30S ribosomal subunit. Contacts proteins S3 and S10.

Binds 16S rRNA, required for the assembly of 30S particles and may also be responsible for determining the conformation of the 16S rRNA at the A site. In Carsonella ruddii, this protein is Small ribosomal subunit protein uS14 (rpsN).